The primary structure comprises 466 residues: Uronate isomerase (466 aa).

Belongs to the metallo-dependent hydrolases superfamily. Uronate isomerase family.

The catalysed reaction is D-glucuronate = D-fructuronate. It carries out the reaction aldehydo-D-galacturonate = keto-D-tagaturonate. It functions in the pathway carbohydrate metabolism; pentose and glucuronate interconversion. In Brucella suis (strain ATCC 23445 / NCTC 10510), this protein is Uronate isomerase.